A 111-amino-acid chain; its full sequence is Colipase (111 aa).

The first 16 residues, 1 to 16 (MKVLVLLLVTLAVVYA), serve as a signal peptide directing secretion. Residues 17–21 (APDPR) constitute a propeptide, enterostatin, activation peptide. Cystine bridges form between cysteine 33/cysteine 44, cysteine 39/cysteine 55, cysteine 43/cysteine 77, cysteine 65/cysteine 85, and cysteine 79/cysteine 103.

The protein belongs to the colipase family. Forms a 1:1 stoichiometric complex with pancreatic lipase. In terms of tissue distribution, expressed by the pancreas.

It localises to the secreted. In terms of biological role, colipase is a cofactor of pancreatic lipase. It allows the lipase to anchor itself to the lipid-water interface. Without colipase the enzyme is washed off by bile salts, which have an inhibitory effect on the lipase. Functionally, enterostatin has a biological activity as a satiety signal. This is Colipase (CLPS) from Ictidomys tridecemlineatus (Thirteen-lined ground squirrel).